A 408-amino-acid chain; its full sequence is Protein BTN1 (408 aa).

The signal sequence occupies residues 1-30 (MSDKSHQIYCYFWLFGLINNVLYVVILSAA). Transmembrane regions (helical) follow at residues 42-62 (LVLL…PFFI), 80-100 (LGMF…ISFA), 128-148 (SGTG…TSIF), 150-170 (VPVK…LFYF), 238-258 (TVYL…LFPI), 323-343 (WFYV…EGFL), and 369-389 (GAVS…GLGL).

This sequence belongs to the battenin family.

Its subcellular location is the vacuole membrane. Its function is as follows. Plays a role in vacuolar arginine transport. Involved in pH homeostasis. May be involved in ion homeostasis together with IST2. Not necessary for mitochondrial function or ATP synthase degradation. This chain is Protein BTN1 (YHC3), found in Saccharomyces cerevisiae (strain ATCC 204508 / S288c) (Baker's yeast).